The following is a 305-amino-acid chain: Oxidoreductase swnR (305 aa).

Belongs to the NmrA-type oxidoreductase family. Isoflavone reductase subfamily.

It catalyses the reaction L-pipecolate + O2 = L-1-piperideine-6-carboxylate + H2O2 + H(+). It participates in mycotoxin biosynthesis. Oxidoreductase; part of the gene cluster that mediates the biosynthesis of swainsonine (SW), a cytotoxic fungal alkaloid and a potential cancer therapy drug. Swainsonine production occurs via a multibranched pathway and is dispensable for fungal colonization of plants and infection of insect hosts. The first step of swainsonine biosynthesis is the production of the precursor pipecolic acid (PA) via conversion of L-lysine (Lys) to 1-piperideine-6-carboxylate (P6C) by the aminotransferase swnA, the latter being further reduced to PA by the reductase swnR. The PKS-NRPS hybrid synthetase swnK uptakes and condensates PA and malonyl-CoA with and without skipping of the ketoreductase (KR) domain in order to produce 3 intermediates, 1-oxoindolizidine, (1S)-1-hydroxyindolizin, and (1R)-1-hydroxyindolizine; with the transisomer (1S)-1-hydroxyindolizin being predominant. The terminal thioester reductase (TE) domain of swnK is involved in reduction of the thioester bond to release the intermediate aldehydes. The oxidoreductase swnN could contribute to the reduction of 1-oxoindolizidine to (1S)-1-hydroxyindolizin and (1R)-1-hydroxyindolizine, contributing to the major route of SW production. The dioxygenase swnH2 would be responsible for the oxidization of (1R)-1-hydroxyindolizine into (1R,2S)-1,2-dihydroxyindolizine and of (1S)-1-hydroxyindolizin to yield both (1R,2S)-1,2-dihydroxyindolizine and (1S,2S)-1,2-dihydroxyindolizine. The dioxygenase swnH1 then performs the conversion of the 1,2-dihydroxyindolizine epimers to SW. This chain is Oxidoreductase swnR, found in Arthroderma benhamiae (strain ATCC MYA-4681 / CBS 112371) (Trichophyton mentagrophytes).